Consider the following 257-residue polypeptide: Acetylglutamate kinase (257 aa).

Residues 43-44, Arg65, and Asn157 contribute to the substrate site; that span reads GG.

This sequence belongs to the acetylglutamate kinase family. ArgB subfamily.

The protein resides in the cytoplasm. It carries out the reaction N-acetyl-L-glutamate + ATP = N-acetyl-L-glutamyl 5-phosphate + ADP. It participates in amino-acid biosynthesis; L-arginine biosynthesis; N(2)-acetyl-L-ornithine from L-glutamate: step 2/4. In terms of biological role, catalyzes the ATP-dependent phosphorylation of N-acetyl-L-glutamate. The polypeptide is Acetylglutamate kinase (Pasteurella multocida (strain Pm70)).